The primary structure comprises 33 residues: Photosystem II reaction center protein Psb30 (33 aa).

Residues 5 to 25 (LIVQLGSLALITVAGPAIIVL) traverse the membrane as a helical segment.

The protein belongs to the Psb30/Ycf12 family. In terms of assembly, PSII is composed of 1 copy each of membrane proteins PsbA, PsbB, PsbC, PsbD, PsbE, PsbF, PsbH, PsbI, PsbJ, PsbK, PsbL, PsbM, PsbT, PsbY, PsbZ, Psb30/Ycf12, peripheral proteins of the oxygen-evolving complex and a large number of cofactors. It forms dimeric complexes.

It is found in the plastid. Its subcellular location is the chloroplast thylakoid membrane. In terms of biological role, a core subunit of photosystem II (PSII), probably helps stabilize the reaction center. The sequence is that of Photosystem II reaction center protein Psb30 from Euglena stellata.